Here is a 515-residue protein sequence, read N- to C-terminus: Probable cytosol aminopeptidase (515 aa).

Positions 274 and 279 each coordinate Mn(2+). K286 is a catalytic residue. Residues D297, D356, and E358 each coordinate Mn(2+). The active site involves R360.

It belongs to the peptidase M17 family. Mn(2+) is required as a cofactor.

Its subcellular location is the cytoplasm. The catalysed reaction is Release of an N-terminal amino acid, Xaa-|-Yaa-, in which Xaa is preferably Leu, but may be other amino acids including Pro although not Arg or Lys, and Yaa may be Pro. Amino acid amides and methyl esters are also readily hydrolyzed, but rates on arylamides are exceedingly low.. It catalyses the reaction Release of an N-terminal amino acid, preferentially leucine, but not glutamic or aspartic acids.. Its function is as follows. Presumably involved in the processing and regular turnover of intracellular proteins. Catalyzes the removal of unsubstituted N-terminal amino acids from various peptides. The sequence is that of Probable cytosol aminopeptidase from Desulforapulum autotrophicum (strain ATCC 43914 / DSM 3382 / VKM B-1955 / HRM2) (Desulfobacterium autotrophicum).